A 566-amino-acid polypeptide reads, in one-letter code: O-fucosyltransferase 36 (566 aa).

A compositionally biased stretch (basic and acidic residues) spans 1-14 (MERNSSDDEEDHQH). The tract at residues 1–37 (MERNSSDDEEDHQHLIPQNDTRIRHREDSVSSNATTI) is disordered. A helical; Signal-anchor for type II membrane protein membrane pass occupies residues 66–86 (YVIVFVSLIISIGLLFLLTDP). N93, N129, N138, N179, and N190 each carry an N-linked (GlcNAc...) asparagine glycan. Residues 415–417 (HFR) and 531–532 (TF) each bind substrate.

It belongs to the glycosyltransferase GT106 family.

It is found in the membrane. Its pathway is glycan metabolism. This Arabidopsis thaliana (Mouse-ear cress) protein is O-fucosyltransferase 36.